We begin with the raw amino-acid sequence, 357 residues long: Homoserine O-succinyltransferase (357 aa).

The Acyl-thioester intermediate role is filled by Cys-146. Lys-167 and Ser-196 together coordinate substrate. His-239 (proton acceptor) is an active-site residue. Glu-241 is a catalytic residue. Arg-253 is a binding site for substrate.

This sequence belongs to the MetA family.

Its subcellular location is the cytoplasm. It carries out the reaction L-homoserine + succinyl-CoA = O-succinyl-L-homoserine + CoA. It participates in amino-acid biosynthesis; L-methionine biosynthesis via de novo pathway; O-succinyl-L-homoserine from L-homoserine: step 1/1. Its function is as follows. Transfers a succinyl group from succinyl-CoA to L-homoserine, forming succinyl-L-homoserine. This is Homoserine O-succinyltransferase from Allochromatium vinosum (strain ATCC 17899 / DSM 180 / NBRC 103801 / NCIMB 10441 / D) (Chromatium vinosum).